We begin with the raw amino-acid sequence, 484 residues long: MANKIRVRYAPSPTGLLHIGNARTALFNYLYARHHGGDFVIRIEDTDRKRHVEDGERSQLENLRWLGMDWDESPETHENYRQSERLELYQRYIDQLLAEGKAYKSYVTEEELAAERERQELAGETPRYINEFIGMSETEKEAYIAEREAAGIIPTVRLAVNESGIYKWTDMVKGDIEFEGSNIGGDWVIQKKDGYPTYNFAVVIDDHDMQISHVIRGDDHIANTPKQLMVYEALGWEAPQFGHMTLIINSETGKKLSKRDTNTLQFIEDYRKKGYMSEAVFNFIALLGWNPGGEEEIFSREQLINLFDENRLSKSPAAFDQKKMDWMSNDYLKNADFESVFALCKPFLEEAGRLTDKAEKLVELYQPQLKSADEIVPLTDLFFADFPELTEAEKEVMAAETVPTVLSAFKEKLVSLSDEEFTRDTIFPQIKAVQKETGIKGKNLFMPIRIAVSGEMHGPELPDTIYLLGKEKSVQHIDNMLAKL.

The short motif at 11 to 21 is the 'HIGH' region element; sequence PSPTGLLHIGN. The short motif at 255-259 is the 'KMSKS' region element; sequence KLSKR. Lys-258 contacts ATP.

Belongs to the class-I aminoacyl-tRNA synthetase family. Glutamate--tRNA ligase type 1 subfamily. Monomer.

It localises to the cytoplasm. It catalyses the reaction tRNA(Glu) + L-glutamate + ATP = L-glutamyl-tRNA(Glu) + AMP + diphosphate. In terms of biological role, catalyzes the attachment of glutamate to tRNA(Glu) in a two-step reaction: glutamate is first activated by ATP to form Glu-AMP and then transferred to the acceptor end of tRNA(Glu). The sequence is that of Glutamate--tRNA ligase from Streptococcus agalactiae serotype V (strain ATCC BAA-611 / 2603 V/R).